The following is a 69-amino-acid chain: Brevinin-1Pb (69 aa).

The first 20 residues, 1–20 (MFTLNKFLLLLFFLGTINLS), serve as a signal peptide directing secretion. Positions 21–43 (FCEEENAEEERIDEPDETDVEVE) are excised as a propeptide. Cys-63 and Cys-69 form a disulfide bridge.

Expressed by the skin glands.

The protein resides in the secreted. Functionally, antibacterial activity against Gram-positive bacterium S.aureus and Gram-negative bacterium E.coli. Has activity against C.albicans. The sequence is that of Brevinin-1Pb from Lithobates pipiens (Northern leopard frog).